Consider the following 467-residue polypeptide: RuvB-like helicase 2 (467 aa).

73 to 80 serves as a coordination point for ATP; that stretch reads GPPSTGKT.

This sequence belongs to the RuvB family. In terms of assembly, may form heterododecamers with RVB1. Component of the SWR1 chromatin remodeling complex, the INO80 chromatin remodeling complex, and of the R2TP complex.

It is found in the nucleus. The catalysed reaction is ATP + H2O = ADP + phosphate + H(+). Functionally, DNA helicase which participates in several chromatin remodeling complexes, including the SWR1 and the INO80 complexes. The SWR1 complex mediates the ATP-dependent exchange of histone H2A for the H2A variant HZT1 leading to transcriptional regulation of selected genes by chromatin remodeling. The INO80 complex remodels chromatin by shifting nucleosomes and is involved in DNA repair. Also involved in pre-rRNA processing. The protein is RuvB-like helicase 2 (RVB2) of Kluyveromyces lactis (strain ATCC 8585 / CBS 2359 / DSM 70799 / NBRC 1267 / NRRL Y-1140 / WM37) (Yeast).